The sequence spans 1221 residues: A disintegrin and metalloproteinase with thrombospondin motifs 18 (1221 aa).

The first 47 residues, 1–47 (MECALLLACAFPAAGSGPPRGLAGLGRVAKALQLCCLCCASVAAALA), serve as a signal peptide directing secretion. A propeptide spanning residues 48 to 284 (SDSSSGASGL…EYGSSGRPRR (237 aa)) is cleaved from the precursor. N151 and N190 each carry an N-linked (GlcNAc...) asparagine glycan. Residues 252–259 (HFCGRRKK) carry the Cysteine switch motif. C254 contributes to the Zn(2+) binding site. The tract at residues 258–291 (KKYAPKPPTEDTYLRFDEYGSSGRPRRSAGKSQK) is disordered. Positions 265 to 275 (PTEDTYLRFDE) are enriched in basic and acidic residues. The Peptidase M12B domain occupies 293 to 498 (LNVETLVVAD…PQAGCLVDEP (206 aa)). A glycan (N-linked (GlcNAc...) asparagine) is linked at N313. Disulfide bonds link C369–C420, C395–C402, C414–C493, C453–C477, C521–C546, C532–C553, C541–C572, C566–C577, C601–C638, C605–C643, and C616–C628. H436 is a binding site for Zn(2+). E437 is a catalytic residue. Zn(2+)-binding residues include H440 and H446. The region spanning 498-577 (PKQAGQYKYP…LSMWCRQGQC (80 aa)) is the Disintegrin domain. One can recognise a TSP type-1 1 domain in the interval 589–644 (HGQWSAWSKWSECSRTCGGGVKFQERHCNNPKPQYGGLFCPGSSRIYQLCNINPCN). Residues N745, N838, and N909 are each glycosylated (N-linked (GlcNAc...) asparagine). The spacer stretch occupies residues 750-876 (FYKGLYLNQH…TPPATKRPAY (127 aa)). TSP type-1 domains are found at residues 931–990 (CPAY…NSHA), 991–1049 (CPPQ…GRCP), 1052–1116 (SRLQ…RACP), and 1123–1178 (MVAG…NFCP). A PLAC domain is found at 1184–1221 (EDPSCVDFFNWCHLVPQHGVCNHKFYGKQCCKSCTRKI).

The cofactor is Zn(2+). The precursor is cleaved by a furin endopeptidase. In terms of processing, glycosylated. Can be O-fucosylated by POFUT2 on a serine or a threonine residue found within the consensus sequence C1-X(2)-(S/T)-C2-G of the TSP type-1 repeat domains where C1 and C2 are the first and second cysteine residue of the repeat, respectively. Fucosylated repeats can then be further glycosylated by the addition of a beta-1,3-glucose residue by the glucosyltransferase, B3GALTL. Fucosylation mediates the efficient secretion of ADAMTS family members. Can also be C-glycosylated with one or two mannose molecules on tryptophan residues within the consensus sequence W-X-X-W of the TPRs, and N-glycosylated. These other glycosylations can also facilitate secretion. In terms of tissue distribution, expressed in fetal lung, liver, and kidney and in adult brain, prostate, submaxillary gland, and endothelium.

It is found in the secreted. The protein resides in the extracellular space. Its subcellular location is the extracellular matrix. In Homo sapiens (Human), this protein is A disintegrin and metalloproteinase with thrombospondin motifs 18 (ADAMTS18).